Consider the following 130-residue polypeptide: Small ribosomal subunit protein uS9 (130 aa).

The protein belongs to the universal ribosomal protein uS9 family.

The polypeptide is Small ribosomal subunit protein uS9 (Shigella sonnei (strain Ss046)).